A 268-amino-acid chain; its full sequence is Tetraspanin-5 (268 aa).

Over 1–17 the chain is Cytoplasmic; the sequence is MSGKHYKGPEVSCCIKY. A helical membrane pass occupies residues 18-38; sequence FIFGFNVIFWFLGITFLGIGL. Over 39-61 the chain is Extracellular; the sequence is WAWNEKGVLSNISSITDLGGFDP. Residue Asn49 is glycosylated (N-linked (GlcNAc...) asparagine). Residues 62–82 traverse the membrane as a helical segment; that stretch reads VWLFLVVGGVMFILGFAGCIG. The Cytoplasmic segment spans residues 83–92; the sequence is ALRENTFLLK. Residues 93-113 form a helical membrane-spanning segment; it reads FFSVFLGIIFFLELTAGVLAF. The Extracellular portion of the chain corresponds to 114–232; it reads VFKDWIKDQL…PQFEKWLQDN (119 aa). Disulfide bonds link Cys153-Cys221, Cys154-Cys186, Cys170-Cys180, and Cys187-Cys200. N-linked (GlcNAc...) asparagine glycosylation is found at Asn169 and Asn174. N-linked (GlcNAc...) asparagine glycosylation is present at Asn232. A helical membrane pass occupies residues 233–253; the sequence is LTIVAGIFIGIALLQIFGICL. The Cytoplasmic portion of the chain corresponds to 254 to 268; the sequence is AQNLVSDIEAVRASW.

It belongs to the tetraspanin (TM4SF) family. As to quaternary structure, interacts with ADAM10; the interaction influences ADAM10 substrate specificity, endocytosis and turnover. In terms of processing, palmitoylated.

It is found in the cell membrane. Its function is as follows. Part of TspanC8 subgroup, composed of 6 members that interact with the transmembrane metalloprotease ADAM10. This interaction is required for ADAM10 exit from the endoplasmic reticulum and for enzymatic maturation and trafficking to the cell surface as well as substrate specificity. Different TspanC8/ADAM10 complexes have distinct substrates. Promotes ADAM10-mediated cleavage of CD44. Seems to regulate VE-cadherin expression in endothelial cells probably through interaction with ADAM10, promoting leukocyte transmigration. In Homo sapiens (Human), this protein is Tetraspanin-5.